The sequence spans 494 residues: Aspartyl/glutamyl-tRNA(Asn/Gln) amidotransferase subunit B (494 aa).

The protein belongs to the GatB/GatE family. GatB subfamily. In terms of assembly, heterotrimer of A, B and C subunits.

The enzyme catalyses L-glutamyl-tRNA(Gln) + L-glutamine + ATP + H2O = L-glutaminyl-tRNA(Gln) + L-glutamate + ADP + phosphate + H(+). It carries out the reaction L-aspartyl-tRNA(Asn) + L-glutamine + ATP + H2O = L-asparaginyl-tRNA(Asn) + L-glutamate + ADP + phosphate + 2 H(+). Functionally, allows the formation of correctly charged Asn-tRNA(Asn) or Gln-tRNA(Gln) through the transamidation of misacylated Asp-tRNA(Asn) or Glu-tRNA(Gln) in organisms which lack either or both of asparaginyl-tRNA or glutaminyl-tRNA synthetases. The reaction takes place in the presence of glutamine and ATP through an activated phospho-Asp-tRNA(Asn) or phospho-Glu-tRNA(Gln). In Rhizorhabdus wittichii (strain DSM 6014 / CCUG 31198 / JCM 15750 / NBRC 105917 / EY 4224 / RW1) (Sphingomonas wittichii), this protein is Aspartyl/glutamyl-tRNA(Asn/Gln) amidotransferase subunit B.